We begin with the raw amino-acid sequence, 366 residues long: NADH-quinone oxidoreductase subunit D (366 aa).

This sequence belongs to the complex I 49 kDa subunit family. As to quaternary structure, NDH-1 is composed of 14 different subunits. Subunits NuoB, C, D, E, F, and G constitute the peripheral sector of the complex.

It localises to the cell membrane. It catalyses the reaction a quinone + NADH + 5 H(+)(in) = a quinol + NAD(+) + 4 H(+)(out). NDH-1 shuttles electrons from NADH, via FMN and iron-sulfur (Fe-S) centers, to quinones in the respiratory chain. The immediate electron acceptor for the enzyme in this species is believed to be a menaquinone. Couples the redox reaction to proton translocation (for every two electrons transferred, four hydrogen ions are translocated across the cytoplasmic membrane), and thus conserves the redox energy in a proton gradient. The chain is NADH-quinone oxidoreductase subunit D from Bacillus cytotoxicus (strain DSM 22905 / CIP 110041 / 391-98 / NVH 391-98).